The primary structure comprises 320 residues: Ferrochelatase (320 aa).

The Fe cation site is built by His194 and Glu275.

Belongs to the ferrochelatase family. As to quaternary structure, monomer.

Its subcellular location is the cytoplasm. The catalysed reaction is heme b + 2 H(+) = protoporphyrin IX + Fe(2+). It functions in the pathway porphyrin-containing compound metabolism; protoheme biosynthesis; protoheme from protoporphyrin-IX: step 1/1. Catalyzes the ferrous insertion into protoporphyrin IX. The sequence is that of Ferrochelatase from Escherichia coli O45:K1 (strain S88 / ExPEC).